A 115-amino-acid polypeptide reads, in one-letter code: Photosystem II reaction center Psb28 protein (115 aa).

The protein belongs to the Psb28 family. In terms of assembly, part of the photosystem II complex.

The protein localises to the plastid. It localises to the chloroplast thylakoid membrane. This is Photosystem II reaction center Psb28 protein from Cyanidium caldarium (Red alga).